The following is a 25-amino-acid chain: Bioremediase (25 aa).

In terms of domain architecture, Alpha-carbonic anhydrase spans 1–25 (DFPIANGERQSPVDIDTKAVVQDPA). Residues 1-25 (DFPIANGERQSPVDIDTKAVVQDPA) form a disordered region.

The protein belongs to the alpha-carbonic anhydrase family. It depends on Zn(2+) as a cofactor.

In terms of biological role, releases silica from silica-rich substances. This Thermoanaerobacter sp protein is Bioremediase.